The primary structure comprises 313 residues: Small ribosomal subunit protein uS2 (313 aa).

A compositionally biased stretch (basic and acidic residues) spans 228–256; sequence RQEDKAAEAQDKDAQDTEDNKGARPRGAE. Residues 228–313 form a disordered region; the sequence is RQEDKAAEAQ…VSKAGDKPKK (86 aa).

This sequence belongs to the universal ribosomal protein uS2 family.

This chain is Small ribosomal subunit protein uS2, found in Amoebophilus asiaticus (strain 5a2).